The chain runs to 365 residues: Membrane cofactor protein (365 aa).

The first 44 residues, 1–44, serve as a signal peptide directing secretion; it reads MTAAPLMPDSTHPCRRRKSYTFFWCSLGVYAEALLFLLSHLSDA. Sushi domains follow at residues 45–106, 107–170, 171–236, and 237–296; these read CELP…GCIK, VQCT…HCEK, IYCL…ECKV, and VKCP…KCLK. At 45–329 the chain is on the extracellular side; sequence CELPRPFEAM…GIFSQELDAW (285 aa). 6 disulfide bridges follow: cysteine 109/cysteine 151, cysteine 137/cysteine 168, cysteine 173/cysteine 221, cysteine 202/cysteine 234, cysteine 239/cysteine 281, and cysteine 267/cysteine 294. Asparagine 181 carries N-linked (GlcNAc...) asparagine glycosylation. A glycan (O-linked (GalNAc...) threonine) is linked at threonine 205. O-linked (GalNAc...) threonine glycosylation is found at threonine 301 and threonine 304. N-linked (GlcNAc...) asparagine glycosylation occurs at asparagine 310. Threonine 312 is a glycosylation site (O-linked (GalNAc...) threonine). A helical transmembrane segment spans residues 330 to 350; the sequence is IIALIVITSIVGVFILCLIVL. The Cytoplasmic segment spans residues 351–365; that stretch reads RCFEHRKKTNVSAAR.

Interacts with C3b. Interacts with C4b. Interacts with moesin/MSN. In terms of processing, may be O-glycosylated. N-glycosylated. As to expression, present only in testis (at protein level).

The protein resides in the cytoplasmic vesicle. The protein localises to the secretory vesicle. It localises to the acrosome inner membrane. Its subcellular location is the secreted. Functionally, may be involved in the fusion of the spermatozoa with the oocyte during fertilization. The protein is Membrane cofactor protein (Cd46) of Mus musculus (Mouse).